The chain runs to 110 residues: Keratin, type I cytoskeletal 19 (110 aa).

Residues Phe1 to Arg8 form a head region. Ser3 bears the Phosphoserine mark. The 104-residue stretch at Phe7–Arg110 folds into the IF rod domain. Arg8 carries the post-translational modification Omega-N-methylarginine. The tract at residues Ile9–Trp42 is coil 1A. Positions Tyr43–Lys45 are linker 1. The coil 1B stretch occupies residues Ile46–Leu83. Residues Ala85–Arg110 form a coil 2 region. The interval Ala85–Arg110 is necessary for interaction with PNN.

It belongs to the intermediate filament family. Heterotetramer of two type I and two type II keratins. Interacts with PNN and the actin-binding domain of DMD.

In terms of biological role, involved in the organization of myofibers. Together with KRT8, helps to link the contractile apparatus to dystrophin at the costameres of striated muscle. The protein is Keratin, type I cytoskeletal 19 of Mesocricetus auratus (Golden hamster).